A 317-amino-acid chain; its full sequence is Ribosomal protein L11 methyltransferase (317 aa).

The S-adenosyl-L-methionine site is built by Thr-158, Gly-179, Asp-201, and Asn-244.

It belongs to the methyltransferase superfamily. PrmA family.

The protein resides in the cytoplasm. The catalysed reaction is L-lysyl-[protein] + 3 S-adenosyl-L-methionine = N(6),N(6),N(6)-trimethyl-L-lysyl-[protein] + 3 S-adenosyl-L-homocysteine + 3 H(+). Its function is as follows. Methylates ribosomal protein L11. The polypeptide is Ribosomal protein L11 methyltransferase (Streptococcus agalactiae serotype Ia (strain ATCC 27591 / A909 / CDC SS700)).